Reading from the N-terminus, the 332-residue chain is MESLLSQLSSMTVVVADTGDLEAIKKYHPRDATTNPSLILAAAQMPAYQSLIDQALTTSREMLGTSAAKADVVKEALDELCVVFGKEILKLIPGRVSTEVDARLSFDTDATIEKARKIIAKYNADGISNDRVLIKIASTWEGIKAAEVLEKENIHCNLTLLFNFYQAVACAEAGVTLISPFVGRILDWYKSATGRDSYPATEDPGVVSVTKIFNFFKSNGYKTEVMGASFRNIEEITELAGCDLLTISPKLLQQLNETHMDLPIKLNAQKPLVIEEKIHLDQTSFELMMAGDKMATEKLDDGISGFSKAIDKLENQLNERLELIEGEVALTH.

K135 functions as the Schiff-base intermediate with substrate in the catalytic mechanism.

This sequence belongs to the transaldolase family. Type 1 subfamily. As to quaternary structure, homodimer.

It is found in the cytoplasm. It catalyses the reaction D-sedoheptulose 7-phosphate + D-glyceraldehyde 3-phosphate = D-erythrose 4-phosphate + beta-D-fructose 6-phosphate. It participates in carbohydrate degradation; pentose phosphate pathway; D-glyceraldehyde 3-phosphate and beta-D-fructose 6-phosphate from D-ribose 5-phosphate and D-xylulose 5-phosphate (non-oxidative stage): step 2/3. In terms of biological role, transaldolase is important for the balance of metabolites in the pentose-phosphate pathway. This Prochlorococcus marinus (strain NATL2A) protein is Transaldolase.